Here is a 1619-residue protein sequence, read N- to C-terminus: Rap-GAP domain-containing protein DDB_G0281809 (1619 aa).

Disordered stretches follow at residues Ser128–Ile249, Gln289–Ser316, Ser907–Asn974, and Ile1134–Asn1153. Composition is skewed to low complexity over residues Ser130 to Leu204 and Gln231 to Ile249. Positions Phe265–Ser295 form a coiled coil. 2 stretches are compositionally biased toward low complexity: residues Ser916–Gly926 and Ser934–Ser965. The Rap-GAP domain maps to Leu1273–Ile1494. A disordered region spans residues Ile1554–Lys1619. Pro residues predominate over residues Leu1559–Ser1573. A compositionally biased stretch (low complexity) spans Pro1574–Ser1590. Polar residues predominate over residues Thr1591–Lys1619.

The chain is Rap-GAP domain-containing protein DDB_G0281809 from Dictyostelium discoideum (Social amoeba).